Consider the following 1399-residue polypeptide: Dicer-like protein 2 (1399 aa).

The Helicase ATP-binding domain maps to 18-194 (MVEESMQSNI…EDLQQIERNL (177 aa)). An ATP-binding site is contributed by 31–38 (MDTGSGKT). The DEAH box signature appears at 139-142 (DEAH). The region spanning 364-549 (KLQLLIKFLV…QSETGHRNFE (186 aa)) is the Helicase C-terminal domain. The 95-residue stretch at 562–656 (ASQHLHHFCS…LPARQEADDE (95 aa)) folds into the Dicer dsRNA-binding fold domain. RNase III domains lie at 897-1054 (LPSI…TVGG) and 1094-1270 (LDVL…IDSL). Positions 1133, 1256, and 1259 each coordinate Mg(2+). A DRBM domain is found at 1301 to 1370 (HPKERLGHLA…AWKAVGVLES (70 aa)).

It belongs to the helicase family. Dicer subfamily. It depends on Mg(2+) as a cofactor. Mn(2+) serves as cofactor.

Functionally, dicer-like endonuclease involved in cleaving double-stranded RNA in the RNA interference (RNAi) pathway. Produces 21 to 25 bp dsRNAs (siRNAs) which target the selective destruction of homologous RNAs leading to sequence-specific suppression of gene expression, called post-transcriptional gene silencing (PTGS). Part of a broad host defense response against viral infection and transposons. The chain is Dicer-like protein 2 (DCL2) from Phaeosphaeria nodorum (strain SN15 / ATCC MYA-4574 / FGSC 10173) (Glume blotch fungus).